Consider the following 838-residue polypeptide: Xyloglucanase (838 aa).

The signal sequence occupies residues 1 to 19; the sequence is MKVSRVLALVLGAVIPAHA. Aspartate 53 functions as the Nucleophile in the catalytic mechanism. N-linked (GlcNAc...) asparagine glycans are attached at residues asparagine 232 and asparagine 436. Aspartate 469 functions as the Proton donor in the catalytic mechanism. The segment at 750-801 is disordered; that stretch reads GTGGTSSSTKQSSSSTSSASSSTTLRSSVVSTTRASTVTSSRTSSAAGPTGS. Residues 754–797 show a composition bias toward low complexity; the sequence is TSSSTKQSSSSTSSASSSTTLRSSVVSTTRASTVTSSRTSSAAG. Positions 802 to 838 constitute a CBM1 domain; the sequence is GVAGHYAQCGGIGWTGPTQCVAPYVCQKQNDYYYQCV.

Belongs to the glycosyl hydrolase 74 family.

The enzyme catalyses Hydrolysis of (1-&gt;4)-D-glucosidic linkages in xyloglucans so as to successively remove oligosaccharides from the newly-formed chain end after endo-initiation on a polymer molecule.. Hydrolyzes the glucosidic bonds of unbranched Glc residues in tamarind seed xyloglucan, producing XXXG, XLXG, XXLG and XLLG. Has a low activity against beta-glucan and carboxymethylcellulose. Not active against Avicel, laminarin, xylan, galactomannan, linear and branched arabinans, galactan, polygalacturonic acid, starch, beta-D-Glcp, beta-D-cellobiose, beta-D-Galp, beta-D-Xylp, alpha-D-Xylp, alpha-L-Araf and alpha-L-Arap. This Hypocrea jecorina (strain QM6a) (Trichoderma reesei) protein is Xyloglucanase.